A 569-amino-acid chain; its full sequence is MATRCFWCWTTLLFCSQLLTGFARASSAGGAKEKGLSQTPTWAVALVCTFFILVSVLLEKALHRVATWLWEKHKNSLLEALEKIKAELMILGFISLLLTFGEQYILKICIPEKAAASMLPCPAPSTHDQDKTHRRRLAAATTSSRCDEGHEPLIPATGLHQLHILLFFMAAFHILYSFITMMLGRLKIRGWKKWEQETCSHDYEFSIDPSRFRLTHETSFVRQHSSFWTKIPFFFYAGCFLQQFFRSVGRTDYLTLRHGFIAAHLAPGRKFDFQKYIKRSLEDDFKVVVGISPLLWASFVIFLLLNVNGWEALFWASILPVLIILAVSTKLQAILTRMALGITERHAVVQGIPLVHGSDKYFWFNRPQLLLHLLHFALFQNAFQLTYFFWVWYSFGLKSCFHTDFKLVIVKLSLGVGALILCSYITLPLYALVTQMGSNMKKAVFDEQMAKALKKWHMTVKKKKGKARKPPTETLGVSDTVSTSTSSFHASGATLLRSKTTGHSTASYMSNFEDQSMSDLEAEPLSPEPIEGHTLVRVGDQNTEIEYTGDISPGNQFSFVKNVPANDID.

At 1–41 the chain is on the extracellular side; that stretch reads MATRCFWCWTTLLFCSQLLTGFARASSAGGAKEKGLSQTPT. The chain crosses the membrane as a helical span at residues 42–62; sequence WAVALVCTFFILVSVLLEKAL. Topologically, residues 63-85 are cytoplasmic; it reads HRVATWLWEKHKNSLLEALEKIK. A helical transmembrane segment spans residues 86–106; sequence AELMILGFISLLLTFGEQYIL. At 107 to 163 the chain is on the extracellular side; sequence KICIPEKAAASMLPCPAPSTHDQDKTHRRRLAAATTSSRCDEGHEPLIPATGLHQLH. The chain crosses the membrane as a helical span at residues 164–184; the sequence is ILLFFMAAFHILYSFITMMLG. The Cytoplasmic portion of the chain corresponds to 185 to 286; the sequence is RLKIRGWKKW…IKRSLEDDFK (102 aa). A helical transmembrane segment spans residues 287–307; it reads VVVGISPLLWASFVIFLLLNV. Position 308 (Asn-308) is a topological domain, extracellular. A helical membrane pass occupies residues 309 to 329; it reads GWEALFWASILPVLIILAVST. Over 330–372 the chain is Cytoplasmic; sequence KLQAILTRMALGITERHAVVQGIPLVHGSDKYFWFNRPQLLLH. The chain crosses the membrane as a helical span at residues 373 to 393; sequence LLHFALFQNAFQLTYFFWVWY. At 394 to 413 the chain is on the extracellular side; it reads SFGLKSCFHTDFKLVIVKLS. A helical membrane pass occupies residues 414 to 434; sequence LGVGALILCSYITLPLYALVT. At 435 to 569 the chain is on the cytoplasmic side; it reads QMGSNMKKAV…VKNVPANDID (135 aa). The interval 447 to 468 is calmodulin-binding; sequence EQMAKALKKWHMTVKKKKGKAR.

It belongs to the MLO family.

Its subcellular location is the membrane. In terms of biological role, may be involved in modulation of pathogen defense and leaf cell death. Activity seems to be regulated by Ca(2+)-dependent calmodulin binding and seems not to require heterotrimeric G proteins. The polypeptide is MLO-like protein 10 (MLO10) (Arabidopsis thaliana (Mouse-ear cress)).